A 267-amino-acid chain; its full sequence is Outer membrane protein assembly factor BamD (267 aa).

Positions 1 to 16 are cleaved as a signal peptide; that stretch reads MKKILLTVSLGLALSA. The N-palmitoyl cysteine moiety is linked to residue C17. The S-diacylglycerol cysteine moiety is linked to residue C17.

It belongs to the BamD family. In terms of assembly, part of the Bam complex.

It localises to the cell outer membrane. Part of the outer membrane protein assembly complex, which is involved in assembly and insertion of beta-barrel proteins into the outer membrane. Required for efficient transformation of Neisseria meningitidis by species-related DNA. This is Outer membrane protein assembly factor BamD from Neisseria meningitidis serogroup B (strain ATCC BAA-335 / MC58).